Consider the following 452-residue polypeptide: Protein EARLY-RESPONSIVE TO DEHYDRATION 7, chloroplastic (452 aa).

Positions 1–18 (MESSGDKQTSSLYPTVDT) are enriched in polar residues. The transit peptide at 1–28 (MESSGDKQTSSLYPTVDTSNPEAPINPS) directs the protein to the chloroplast. The interval 1–37 (MESSGDKQTSSLYPTVDTSNPEAPINPSSSSSTNNLY) is disordered. Residues 19-37 (SNPEAPINPSSSSSTNNLY) show a composition bias toward low complexity. The Senescence domain maps to 258 to 426 (IATGSGHLIK…AWVAFKIRKA (169 aa)).

The protein localises to the plastid. The protein resides in the chloroplast. This Arabidopsis thaliana (Mouse-ear cress) protein is Protein EARLY-RESPONSIVE TO DEHYDRATION 7, chloroplastic.